Consider the following 95-residue polypeptide: Cell division protein FtsB (95 aa).

Over 1–3 the chain is Cytoplasmic; the sequence is MRL. Residues 4-21 traverse the membrane as a helical segment; that stretch reads FILILSAILLLFQYDLWF. The Periplasmic segment spans residues 22–95; the sequence is GKNGYLDYKE…RIAKENKDNR (74 aa). Residues 28 to 62 adopt a coiled-coil conformation; the sequence is DYKETAEEIAMHKAENTKLSQRNQVVAAEIRDLKD.

It belongs to the FtsB family. In terms of assembly, part of a complex composed of FtsB, FtsL and FtsQ.

It localises to the cell inner membrane. Functionally, essential cell division protein. May link together the upstream cell division proteins, which are predominantly cytoplasmic, with the downstream cell division proteins, which are predominantly periplasmic. The chain is Cell division protein FtsB from Mannheimia succiniciproducens (strain KCTC 0769BP / MBEL55E).